Consider the following 432-residue polypeptide: Solute carrier family 35 member F5 (432 aa).

The N-terminal stretch at 1 to 33 (MFLPSTTNHSSAPLQKHLCLFCTFWALLFGSHG) is a signal peptide. S116 is subject to Phosphoserine. A run of 8 helical transmembrane segments spans residues 152-172 (ISFFFCFVWFLANLSYQEALS), 177-197 (AIVNILSSTSGLFTLILAAVF), 205-225 (FTLSKLLAVILSIGGVVLVNL), 236-256 (TIGSIWSLAGAMLYAVYIVMI), 270-290 (MFFGFVGLFNLLLLWPGFFLL), 304-324 (VVLMCIIINGLIGTVLSEFLW), 329-349 (FLTSSLIGTLALSLTIPLSII), and 361-381 (WLFFAGAIPVFFSFFIVTLLC). An EamA domain is found at 161–225 (FLANLSYQEA…SIGGVVLVNL (65 aa)).

The protein belongs to the SLC35F solute transporter family.

It is found in the membrane. Functionally, putative solute transporter. The chain is Solute carrier family 35 member F5 (SLC35F5) from Macaca fascicularis (Crab-eating macaque).